The primary structure comprises 254 residues: Ribosomal RNA small subunit methyltransferase A (254 aa).

S-adenosyl-L-methionine contacts are provided by N12, L14, G38, E59, D83, and N100.

Belongs to the class I-like SAM-binding methyltransferase superfamily. rRNA adenine N(6)-methyltransferase family. RsmA subfamily.

It localises to the cytoplasm. The enzyme catalyses adenosine(1518)/adenosine(1519) in 16S rRNA + 4 S-adenosyl-L-methionine = N(6)-dimethyladenosine(1518)/N(6)-dimethyladenosine(1519) in 16S rRNA + 4 S-adenosyl-L-homocysteine + 4 H(+). Specifically dimethylates two adjacent adenosines (A1518 and A1519) in the loop of a conserved hairpin near the 3'-end of 16S rRNA in the 30S particle. May play a critical role in biogenesis of 30S subunits. This Mycoplasma mobile (strain ATCC 43663 / 163K / NCTC 11711) (Mesomycoplasma mobile) protein is Ribosomal RNA small subunit methyltransferase A.